The following is a 306-amino-acid chain: Glutathione transport system permease protein GsiC (306 aa).

The Cytoplasmic segment spans residues 1 to 8 (MLNYVIKR). Residues 9–29 (LLGLIPTLFIVSVLVFLFVHM) form a helical membrane-spanning segment. The Periplasmic portion of the chain corresponds to 30–102 (LPGDPARLIA…SRFMPTLWLT (73 aa)). The 198-residue stretch at 95 to 292 (FMPTLWLTIT…LEFILINLVV (198 aa)) folds into the ABC transmembrane type-1 domain. The helical transmembrane segment at 103 to 123 (ITSMVWAVIFGMAAGIIAAVW) threads the bilayer. Residues 124-134 (RNRWPDRLSMT) are Cytoplasmic-facing. A helical membrane pass occupies residues 135 to 155 (IAVSGISFPAFALGMFLIQVF). Topologically, residues 156 to 168 (SVELGWLPTVGAD) are periplasmic. The helical transmembrane segment at 169–189 (SWQHYILPSLTLGAAVAAVMA) threads the bilayer. Residues 190-228 (RFTRASFVDVLSEDYMRTARAKGVSETWVVLKHGLRNAM) are Cytoplasmic-facing. A helical transmembrane segment spans residues 229 to 249 (IPVVTMMGLQFGFLLGGSIVV). The Periplasmic portion of the chain corresponds to 250-277 (EKVFNWPGLGRLLVDSVEMRDYPVIQAE). Residues 278–298 (ILLFSLEFILINLVVDVLYAA) traverse the membrane as a helical segment. Over 299 to 306 (INPAIRYK) the chain is Cytoplasmic.

Belongs to the binding-protein-dependent transport system permease family. In terms of assembly, the complex is composed of two ATP-binding proteins (GsiA), two transmembrane proteins (GsiC and GsiD) and a solute-binding protein (GsiB).

It is found in the cell inner membrane. In terms of biological role, part of the ABC transporter complex GsiABCD involved in glutathione import. Probably responsible for the translocation of the substrate across the membrane. The sequence is that of Glutathione transport system permease protein GsiC from Shigella flexneri serotype 5b (strain 8401).